Reading from the N-terminus, the 187-residue chain is Bifunctional protein PyrR (187 aa).

Positions 109 to 121 (VILVDDVLYSGRS) match the PRPP-binding motif.

It belongs to the purine/pyrimidine phosphoribosyltransferase family. PyrR subfamily.

It catalyses the reaction UMP + diphosphate = 5-phospho-alpha-D-ribose 1-diphosphate + uracil. Its function is as follows. Regulates the transcription of the pyrimidine nucleotide (pyr) operon in response to exogenous pyrimidines. In terms of biological role, also displays a weak uracil phosphoribosyltransferase activity which is not physiologically significant. This Mycobacterium ulcerans (strain Agy99) protein is Bifunctional protein PyrR.